The sequence spans 171 residues: Putative phosphoesterase BPUM_1117 (171 aa).

Catalysis depends on His-34, which acts as the Proton donor. 2 consecutive short sequence motifs (HXTX) follow at residues 34–37 (HLTL) and 115–118 (HVTV). His-115 acts as the Proton acceptor in catalysis.

It belongs to the 2H phosphoesterase superfamily. YjcG family.

The protein is Putative phosphoesterase BPUM_1117 of Bacillus pumilus (strain SAFR-032).